Reading from the N-terminus, the 142-residue chain is MPNGKYAAHRLQQVRKDARWKDTGYSRRTLGLDIKSDPLSGAPQGRGIVLEKVGVEAKQPNSAIRKCVRIQLIKNGRQATAFCPGDGAINFIDEHDEVTVERIGGRMGGAMGDIPGVRFKVIAVNNVSLREMVIGRKEKPRR.

This sequence belongs to the universal ribosomal protein uS12 family. As to quaternary structure, part of the 30S ribosomal subunit.

In terms of biological role, with S4 and S5 plays an important role in translational accuracy. Located at the interface of the 30S and 50S subunits. The protein is Small ribosomal subunit protein uS12 of Methanococcoides burtonii (strain DSM 6242 / NBRC 107633 / OCM 468 / ACE-M).